The following is a 352-amino-acid chain: Homeobox protein Mohawk (352 aa).

Residues 19–54 (GASERERGGRPYSGVLDSPHARPEVGIPDGPPLKDN) form a disordered region. Residues 71–132 (VRHKRQALQD…NARRRLKNTV (62 aa)) constitute a DNA-binding region (homeobox; TALE-type). 2 disordered regions span residues 159–189 (VSSD…VHHP) and 245–301 (TRQR…PSKD).

The protein belongs to the TALE/IRO homeobox family.

It is found in the nucleus. May act as a morphogenetic regulator of cell adhesion. The protein is Homeobox protein Mohawk (MKX) of Homo sapiens (Human).